Consider the following 136-residue polypeptide: UPF0225 protein Pnap_0466 (136 aa).

It belongs to the UPF0225 family.

The sequence is that of UPF0225 protein Pnap_0466 from Polaromonas naphthalenivorans (strain CJ2).